An 841-amino-acid chain; its full sequence is Formin-like protein 10 (841 aa).

An N-terminal signal peptide occupies residues 1 to 25 (MDGLCYVIFIIFSLLSCAFSPLSYA). The chain crosses the membrane as a helical span at residues 102 to 122 (LIPAISAVLAAATLIALAFFF). Disordered regions lie at residues 137–166 (SKSLASDISQSQQQTLPCPPPRNNNTQNKL), 254–297 (ISSH…RTVR), and 403–512 (KSSW…SKQR). Polar residues predominate over residues 139 to 152 (SLASDISQSQQQTL). The segment covering 254-278 (ISSHSDSPAMSPSAAMSPPMNSTAP) has biased composition (low complexity). A compositionally biased stretch (polar residues) spans 279–293 (HWSTNQNTHSPSSPE). Residues 426-444 (LPPPQRPPPAMPEPPPLVP) show a composition bias toward pro residues. Positions 469-841 (EGTTDRPKPK…KKMEVTSSLA (373 aa)) constitute an FH2 domain. The segment covering 502–512 (YNSSNANSKQR) has biased composition (polar residues).

It belongs to the formin-like family. Class-I subfamily.

Its subcellular location is the membrane. Its function is as follows. Might be involved in the organization and polarity of the actin cytoskeleton. The sequence is that of Formin-like protein 10 (FH10) from Arabidopsis thaliana (Mouse-ear cress).